The following is a 356-amino-acid chain: Zinc finger protein 830 (356 aa).

Residues 11 to 33 (AQEELRKLMKAKQRESSSKKRIE) adopt a coiled-coil conformation. Residues 47–69 (CVVCNSLIKSELLWPAHILGKQH) form a C2H2-type zinc finger. Positions 71–195 (EKVAELKGTK…PTSSADNLPA (125 aa)) are disordered. Polar residues predominate over residues 80–90 (KATTSSPSNTI). Composition is skewed to basic and acidic residues over residues 99 to 118 (KGSE…EDHP) and 125 to 135 (LPEEFFEKEKT). Over residues 150–165 (DYEDVDDDDAEEGEEY) the composition is skewed to acidic residues. A coiled-coil region spans residues 278-322 (AEEDEEGRLDRQIDEIDEQIQCYRRVEHLRDRKDTLQDAKMEVLK).

The protein localises to the nucleus. It localises to the chromosome. It is found in the nucleus speckle. In terms of biological role, may act as an important regulator of the cell cycle that participates in the maintenance of genome integrity. This Xenopus laevis (African clawed frog) protein is Zinc finger protein 830.